Consider the following 67-residue polypeptide: MQNDWQEFKEFFIYIFLFIDKANVESIIMWNLTQNEYLTLMVGVWVVILFLTWFFLWMVFKIVGYFK.

2 helical membrane passes run 10 to 30 and 40 to 60; these read EFFI…IIMW and LMVG…WMVF.

Belongs to the plectrovirus ORF10 family.

The protein localises to the host membrane. This is an uncharacterized protein from Spiroplasma melliferum (SpV1).